Consider the following 359-residue polypeptide: DNA polymerase IV (359 aa).

The UmuC domain maps to 4–184 (IVHVDMDAFY…LKVNRIPGVG (181 aa)). 2 residues coordinate Mg(2+): Asp-8 and Asp-102. Glu-103 is a catalytic residue.

Belongs to the DNA polymerase type-Y family. In terms of assembly, monomer. Requires Mg(2+) as cofactor.

The protein resides in the cytoplasm. The catalysed reaction is DNA(n) + a 2'-deoxyribonucleoside 5'-triphosphate = DNA(n+1) + diphosphate. In terms of biological role, poorly processive, error-prone DNA polymerase involved in untargeted mutagenesis. Copies undamaged DNA at stalled replication forks, which arise in vivo from mismatched or misaligned primer ends. These misaligned primers can be extended by PolIV. Exhibits no 3'-5' exonuclease (proofreading) activity. May be involved in translesional synthesis, in conjunction with the beta clamp from PolIII. The protein is DNA polymerase IV of Xanthomonas axonopodis pv. citri (strain 306).